The primary structure comprises 532 residues: T-complex protein 1 subunit beta (532 aa).

The protein belongs to the TCP-1 chaperonin family. Heterooligomeric complex of about 850 to 900 kDa that forms two stacked rings, 12 to 16 nm in diameter.

The protein localises to the cytoplasm. In terms of biological role, molecular chaperone; assists the folding of proteins upon ATP hydrolysis. Known to play a role, in vitro, in the folding of actin and tubulin. In Dictyostelium discoideum (Social amoeba), this protein is T-complex protein 1 subunit beta (cct2).